The following is a 711-amino-acid chain: Putative membrane protein IgaA homolog (711 aa).

Position 1 (Met-1) is a topological domain, periplasmic. The helical transmembrane segment at 2–22 (STIVIFLAALLACSLLAGWLI) threads the bilayer. At 23-204 (KVRSRRRQLP…YALSRPRGLR (182 aa)) the chain is on the cytoplasmic side. Helical transmembrane passes span 205–225 (EALLIVASFLMFFFCLITPDV) and 226–246 (FVPWLAGGALLLLGAGLWGLF). The Cytoplasmic segment spans residues 247–339 (APPAKSSLRE…KNFPLQHWLR (93 aa)). Residues 340–360 (STIIAAGSLLVLFMLLFWIPL) traverse the membrane as a helical segment. At 361 to 655 (DMPLKFTLSW…IPDRSGLWRY (295 aa)) the chain is on the periplasmic side. A helical membrane pass occupies residues 656–676 (LSTTLLLLTMLGSAIYNGVQA). The Cytoplasmic portion of the chain corresponds to 677 to 711 (WRRYQRHRTRMMEIQAYYESCLNPQLITPSESLIE).

It belongs to the IgaA family.

Its subcellular location is the cell inner membrane. The sequence is that of Putative membrane protein IgaA homolog (yrfF) from Escherichia coli (strain K12).